Here is a 133-residue protein sequence, read N- to C-terminus: uncharacterized protein (133 aa).

This sequence belongs to the mimivirus L15/L51/R83 family.

This is an uncharacterized protein from Acanthamoeba polyphaga (Amoeba).